A 679-amino-acid chain; its full sequence is HEAT repeat-containing protein 3 (679 aa).

Residues 1 to 11 (MGKSRTKRFKR) are compositionally biased toward basic residues. The interval 1 to 40 (MGKSRTKRFKRPQFSPIESCQAEAAAASNGTGDEEDDGPA) is disordered. Residue Ser-15 is modified to Phosphoserine. HEAT repeat units follow at residues 38-69 (GPAA…VQQR) and 74-110 (DLAR…SACG). Ser-144 bears the Phosphoserine mark. The residue at position 339 (Thr-339) is a Phosphothreonine.

This sequence belongs to the nuclear import and ribosome assembly adapter family. Component of a hexameric 5S RNP precursor complex, composed of 5S RNA, RRS1, RPF2/BXDC1, RPL5, RPL11 and HEATR3; this complex acts as a precursor for ribosome assembly.

Its function is as follows. Plays a role in ribosome biogenesis and in nuclear import of the 60S ribosomal protein L5/large ribosomal subunit protein uL18 (RPL5). Required for proper erythrocyte maturation. The protein is HEAT repeat-containing protein 3 (Heatr3) of Mus musculus (Mouse).